The primary structure comprises 663 residues: Alcohol oxidase 1 (663 aa).

8-38 (DILVLGGGSSGSCIAGRLANLDHSLKVGLIE) provides a ligand contact to FAD. His-567 serves as the catalytic Proton acceptor. The Microbody targeting signal signature appears at 661–663 (ARF).

The protein belongs to the GMC oxidoreductase family. Homooctamer. FAD is required as a cofactor.

It localises to the peroxisome matrix. The catalysed reaction is a primary alcohol + O2 = an aldehyde + H2O2. Its pathway is energy metabolism; methane degradation. Major isoform of alcohol oxidase, which catalyzes the oxidation of methanol to formaldehyde and hydrogen peroxide, the first step in the methanol utilization pathway of methylotrophic yeasts. The chain is Alcohol oxidase 1 (AOX1) from Komagataella phaffii (strain ATCC 76273 / CBS 7435 / CECT 11047 / NRRL Y-11430 / Wegner 21-1) (Yeast).